A 601-amino-acid chain; its full sequence is Glutathione-regulated potassium-efflux system protein KefB (601 aa).

13 helical membrane-spanning segments follow: residues 4-24, 29-49, 55-75, 87-107, 111-131, 152-172, 177-197, 207-227, 230-250, 262-282, 284-304, 324-344, and 356-376; these read ADLLTAGVLFLFAAVAAVPLA, IGAVLGYLLAGIAIGPWGLGF, EILHFSELGVVFLMFIIGLEL, IFGVGAAQVLLSAAVLAGLLM, FLWQAAVVGGIGLAMSSTAMA, VLLFQDLAVIPALALVPLLAG, HFDWFKVAMKVLAFAVMLIGG, FIAASGVREVFTAATLLLVLS, LFMDALGLSMALGTFIAGVLL, AIDPFKGLLLGLFFISVGMSL, LGVLYTHLLWVAASVVILVVI, MQFASVLSQGGEFAFVLFSTA, and ALLLVTVTLSMMTTPLLMKGI. Residues 400–519 form the RCK N-terminal domain; it reads KPQVIVVGFG…AGVTQFSRET (120 aa).

Belongs to the monovalent cation:proton antiporter 2 (CPA2) transporter (TC 2.A.37) family. KefB subfamily. In terms of assembly, interacts with the regulatory subunit KefG.

It localises to the cell inner membrane. Its function is as follows. Pore-forming subunit of a potassium efflux system that confers protection against electrophiles. Catalyzes K(+)/H(+) antiport. The protein is Glutathione-regulated potassium-efflux system protein KefB of Salmonella paratyphi A (strain ATCC 9150 / SARB42).